Reading from the N-terminus, the 179-residue chain is Inner membrane-spanning protein YciB (179 aa).

Transmembrane regions (helical) follow at residues 22-42 (IYVA…FTWF), 50-70 (MTLI…VFHN), 76-96 (WKVT…QLVL), 121-141 (LAWA…AFWL), and 149-169 (FKVF…GVYI).

The protein belongs to the YciB family.

Its subcellular location is the cell inner membrane. Plays a role in cell envelope biogenesis, maintenance of cell envelope integrity and membrane homeostasis. The sequence is that of Inner membrane-spanning protein YciB from Serratia proteamaculans (strain 568).